The sequence spans 557 residues: Potassium-transporting ATPase potassium-binding subunit (557 aa).

Transmembrane regions (helical) follow at residues 5 to 25 (GFLL…PLGS), 63 to 83 (LCAI…MLLG), 132 to 152 (GLTV…FALI), 170 to 190 (LLRI…LFFI), 253 to 273 (FVQM…FGEV), 283 to 303 (LLWA…WAEV), 329 to 349 (VLVS…AVIA), 356 to 376 (ALGG…FGGV), 379 to 399 (GLYG…LMIG), 416 to 436 (LTAL…ALAM), 484 to 504 (LLAF…MAIA), and 526 to 546 (LFVG…FIPA).

The protein belongs to the KdpA family. The system is composed of three essential subunits: KdpA, KdpB and KdpC.

Its subcellular location is the cell inner membrane. Part of the high-affinity ATP-driven potassium transport (or Kdp) system, which catalyzes the hydrolysis of ATP coupled with the electrogenic transport of potassium into the cytoplasm. This subunit binds the periplasmic potassium ions and delivers the ions to the membrane domain of KdpB through an intramembrane tunnel. The protein is Potassium-transporting ATPase potassium-binding subunit of Escherichia coli O17:K52:H18 (strain UMN026 / ExPEC).